We begin with the raw amino-acid sequence, 563 residues long: Membrane protein insertase YidC (563 aa).

Residues 6–26 traverse the membrane as a helical segment; that stretch reads TILWMIFSFSLLLLWNNWQIH. The tract at residues 36–68 is disordered; that stretch reads PPASSAASPAEGQQAAANGQAATPSVPTTPAAA. 4 consecutive transmembrane segments (helical) span residues 373 to 393, 443 to 463, 482 to 502, and 512 to 532; these read WGWAIVALTVIIKAVFFPLAA, LPMVVQIPVFIALYWVLLASV, PYFILPAVMMATMFLQIKLNP, and VMMIMPLVFGGMMFFFPAGLV.

Belongs to the OXA1/ALB3/YidC family. Type 1 subfamily. Interacts with the Sec translocase complex via SecD. Specifically interacts with transmembrane segments of nascent integral membrane proteins during membrane integration.

Its subcellular location is the cell inner membrane. Required for the insertion and/or proper folding and/or complex formation of integral membrane proteins into the membrane. Involved in integration of membrane proteins that insert both dependently and independently of the Sec translocase complex, as well as at least some lipoproteins. Aids folding of multispanning membrane proteins. The polypeptide is Membrane protein insertase YidC (Bordetella petrii (strain ATCC BAA-461 / DSM 12804 / CCUG 43448)).